The chain runs to 121 residues: Oxalate-binding protein (121 aa).

The Cupin type-2 domain occupies 49-117 (RMKLPPGSSV…GNTDLEFLAV (69 aa)). Mn(2+) is bound by residues His-61, His-63, and Glu-68. Tyr-70 is a binding site for oxalate. Residue His-102 participates in Mn(2+) binding.

Homodimer.

Its function is as follows. Binds oxalate. The protein is Oxalate-binding protein of Thermotoga maritima (strain ATCC 43589 / DSM 3109 / JCM 10099 / NBRC 100826 / MSB8).